The primary structure comprises 214 residues: Homeobox protein HEX homolog pha-2 (214 aa).

Disordered stretches follow at residues 1–50 and 180–214; these read MDQK…QKME and RRVR…LSHG. Residues 24–34 show a composition bias toward low complexity; that stretch reads SSESPIPTGSE. Polar residues predominate over residues 35–44; the sequence is CSLNESSDTT. Residues 124-183 constitute a DNA-binding region (homeobox); it reads RKGGQIRFTNEQTDALEHKFDSHKYLSPQERKKLAKSLSLSERQVKTWFQNRRAKWRRVR. Residues 200-214 are compositionally biased toward polar residues; the sequence is SLGQLQSSNPFLSHG.

It is found in the nucleus. Transcriptional repressor. Involved in pharyngeal development and required for the formation of the pharyngeal isthmus. Plays a role in modulating cytoskeleton in the muscle cells of the isthmus. Regulates expression of the acetylcholinesterase genes ace-1 and ace-2. May regulate its own expression. This is Homeobox protein HEX homolog pha-2 from Caenorhabditis elegans.